Reading from the N-terminus, the 901-residue chain is Protein translocase subunit SecA (901 aa).

Residues Q87, G105 to T109, and D512 each bind ATP. Residues H859–Q901 are disordered. Residues C885, C887, C896, and H897 each contribute to the Zn(2+) site. Residues K891–Q901 show a composition bias toward basic residues.

Belongs to the SecA family. Monomer and homodimer. Part of the essential Sec protein translocation apparatus which comprises SecA, SecYEG and auxiliary proteins SecDF-YajC and YidC. The cofactor is Zn(2+).

Its subcellular location is the cell inner membrane. It is found in the cytoplasm. It carries out the reaction ATP + H2O + cellular proteinSide 1 = ADP + phosphate + cellular proteinSide 2.. Functionally, part of the Sec protein translocase complex. Interacts with the SecYEG preprotein conducting channel. Has a central role in coupling the hydrolysis of ATP to the transfer of proteins into and across the cell membrane, serving both as a receptor for the preprotein-SecB complex and as an ATP-driven molecular motor driving the stepwise translocation of polypeptide chains across the membrane. The chain is Protein translocase subunit SecA from Escherichia coli O127:H6 (strain E2348/69 / EPEC).